The primary structure comprises 280 residues: MPFVVVSGLSGSGKSTALRTLEDAGFFITDNLPPELWGAMHDLATARGLERVAVSTDARTRFFLGALEDSYLRLSRRREDLRVLFLEATSEVLLRRYNLTRREHPLGETLLVDFARERELLAPLRALADIVIDTTDLTAAELSQKVLQMLRLEQDFHLRLLSFGFKHAPPRDADLVIDVRSLPNPYYVPELRPRTGLEPAVAGYVFRDEASEQFYREVRDFVRLAAGRARAAGRHGYTVAIGCTGGQHRSVAVAERLAADLTDLGAQVTDHRDMQVGEGG.

8 to 15 provides a ligand contact to ATP; that stretch reads GLSGSGKS. 57–60 serves as a coordination point for GTP; sequence DART.

Belongs to the RapZ-like family.

Its function is as follows. Displays ATPase and GTPase activities. This chain is Nucleotide-binding protein Dgeo_0723, found in Deinococcus geothermalis (strain DSM 11300 / CIP 105573 / AG-3a).